The chain runs to 214 residues: Thymidylate kinase (214 aa).

14–21 (GLEGAGKT) provides a ligand contact to ATP.

Belongs to the thymidylate kinase family.

The catalysed reaction is dTMP + ATP = dTDP + ADP. Its function is as follows. Phosphorylation of dTMP to form dTDP in both de novo and salvage pathways of dTTP synthesis. The sequence is that of Thymidylate kinase from Mannheimia succiniciproducens (strain KCTC 0769BP / MBEL55E).